The following is a 365-amino-acid chain: MGRSPCCDENGLKKGPWTPEEDQKLIDYIHKHGHGSWRALPKLADLNRCGKSCRLRWTNYLRPDIKRGKFSAEEEQTILHLHSILGNKWSAIATHLQGRTDNEIKNFWNTHLKKKLIQMGIDPVTHQPRTDLFASLPQLIALANLKDLIEQTSQFSSMQGEAAQLANLQYLQRMFNSSASLTNNNGNNFSPSSILDIDQHHAMNLLNSMVSWNKDQNPAFDPVLELEANDQNQDLFPLGFIIDQPTQPLQQQKYHLNNSPSELPSQGDPLLDHVPFSLQTPLNSEDHFIDNLVKHPTDHEHEHDDNPSSWVLPSLIDNNPKTVTSSLPHNNPADASSSSSYGGCEAASFYWPDICFDESLMNVIS.

HTH myb-type domains are found at residues 9 to 61 (ENGL…TNYL) and 62 to 116 (RPDI…KKKL). 2 DNA-binding regions (H-T-H motif) span residues 37-61 (WRALPKLADLNRCGKSCRLRWTNYL) and 89-112 (WSAIATHLQGRTDNEIKNFWNTHL).

In terms of assembly, interacts with FBX5.

The protein resides in the nucleus. It is found in the cytoplasm. Its function is as follows. Transcription factor that acts as a negative regulator of lateral root (LR) development. Required for normal auxin responses during LR development. May be part of a negative feedback loop stimulated specifically in the endodermis upon LR initiation to ensure that LRs are formed only in the correct place. This chain is Transcription factor MYB93, found in Arabidopsis thaliana (Mouse-ear cress).